The chain runs to 321 residues: Anthranilate phosphoribosyltransferase (321 aa).

5-phospho-alpha-D-ribose 1-diphosphate contacts are provided by residues Gly72, 75 to 76, Thr80, 82 to 85, 99 to 107, and Ser111; these read GD, NVST, and KHGNVSITS. Residue Gly72 participates in anthranilate binding. Mg(2+) is bound at residue Ser84. Asn102 is a binding site for anthranilate. Residue Arg157 coordinates anthranilate. The Mg(2+) site is built by Asp216 and Glu217.

It belongs to the anthranilate phosphoribosyltransferase family. Homodimer. It depends on Mg(2+) as a cofactor.

It carries out the reaction N-(5-phospho-beta-D-ribosyl)anthranilate + diphosphate = 5-phospho-alpha-D-ribose 1-diphosphate + anthranilate. It functions in the pathway amino-acid biosynthesis; L-tryptophan biosynthesis; L-tryptophan from chorismate: step 2/5. In terms of biological role, catalyzes the transfer of the phosphoribosyl group of 5-phosphorylribose-1-pyrophosphate (PRPP) to anthranilate to yield N-(5'-phosphoribosyl)-anthranilate (PRA). This Methanococcus maripaludis (strain C7 / ATCC BAA-1331) protein is Anthranilate phosphoribosyltransferase.